The sequence spans 80 residues: Antitoxin VapB15 (80 aa).

A disordered region spans residues 60–80 (DFSNDEIESFSDTDRKLADES). E67 lines the Mg(2+) pocket. E67 lines the Mn(2+) pocket. Positions 71-80 (DTDRKLADES) are enriched in basic and acidic residues.

In terms of assembly, forms a VapB15-VapC15(2) heterotrimer and a VapB15(2)-VapC15(2) heterotetramer; each toxin pair forms a homodimer which creates a channel in which the antitoxin binds. The cofactor is Mg(2+). It depends on Mn(2+) as a cofactor.

In terms of biological role, antitoxin component of a type II toxin-antitoxin (TA) system. Neutralizes the toxic effect of cognate toxin VapC15. In Mycobacterium tuberculosis (strain CDC 1551 / Oshkosh), this protein is Antitoxin VapB15 (vapB15).